The following is a 283-amino-acid chain: Small ribosomal subunit protein uS3 (283 aa).

Residues 39–107 form the KH type-2 domain; it reads VRAYLKTKLK…PVHVNIEEIR (69 aa). The interval 209–283 is disordered; that stretch reads PSGEPPVDLT…GAVPAEKAGE (75 aa). The segment covering 217–235 has biased composition (basic and acidic residues); that stretch reads LTKEDDTKRRGPRRDDGKP. Low complexity predominate over residues 244–260; sequence PEGQPGAAAAPGAAPAA.

It belongs to the universal ribosomal protein uS3 family. Part of the 30S ribosomal subunit. Forms a tight complex with proteins S10 and S14.

Its function is as follows. Binds the lower part of the 30S subunit head. Binds mRNA in the 70S ribosome, positioning it for translation. The protein is Small ribosomal subunit protein uS3 of Herminiimonas arsenicoxydans.